An 853-amino-acid chain; its full sequence is DNA mismatch repair protein MutS (853 aa).

Residue Gly-614–Ser-621 participates in ATP binding.

It belongs to the DNA mismatch repair MutS family.

This protein is involved in the repair of mismatches in DNA. It is possible that it carries out the mismatch recognition step. This protein has a weak ATPase activity. In Escherichia coli O157:H7 (strain EC4115 / EHEC), this protein is DNA mismatch repair protein MutS.